The sequence spans 265 residues: S-antigen protein (265 aa).

A signal peptide spans 1-23 (MNRILSVTFYLFFIYLYIYETYG). Residues 59-265 (DLQAEGEGEN…SIKNIMNMFI (207 aa)) form a disordered region. Acidic residues predominate over residues 60–86 (LQAEGEGENDKEEDSNNEEMNIDEENG). A run of 12 repeats spans residues 97–107 (PAKASQGGLED), 108–118 (PAKASQGGLED), 119–129 (PAKASQGGLED), 130–140 (PAKASQGGLED), 141–151 (PAKASQGGLED), 152–162 (PAKASQGGLED), 163–173 (PAKASQGGLED), 174–184 (PAKASQGGLED), 185–195 (PAKASQGGLED), 196–206 (PAKASQGGLED), 207–217 (PAKASQGGLED), and 218–228 (PAKASQGGLED). The tract at residues 97–239 (PAKASQGGLE…AKASQGGAEG (143 aa)) is 13 X 11 AA approximate tandem repeats of P-A-K-A-S-Q-G-G-L-E-D. One copy of the 13; approximate repeat lies at 229 to 239 (PAKASQGGAEG). Positions 239–257 (GHGKHAPNKENKNKNKESI) are enriched in basic and acidic residues.

The protein resides in the parasitophorous vacuole. Its function is as follows. S antigens are soluble heat-stable proteins present in the sera of some infected individuals. In Plasmodium falciparum (isolate FC27 / Papua New Guinea), this protein is S-antigen protein.